Consider the following 698-residue polypeptide: UvrABC system protein B (698 aa).

The region spanning 28 to 414 (RRILAGERDV…SGGEFVEQVI (387 aa)) is the Helicase ATP-binding domain. 41–48 (GATGTGKS) serves as a coordination point for ATP. The Beta-hairpin motif lies at 94 to 117 (YYDYYQPEAYIAQTDTYIEKDSSI). One can recognise a Helicase C-terminal domain in the interval 432–598 (QIDDLIGEIR…PLRKKIADIL (167 aa)). The interval 609–629 (DTVQVGGSGRNVSRGRRAQSE) is disordered. One can recognise a UVR domain in the interval 653-688 (ADLIKDLTAQMMAAASDLQFELAARFRDEIADLKKE).

This sequence belongs to the UvrB family. As to quaternary structure, forms a heterotetramer with UvrA during the search for lesions. Interacts with UvrC in an incision complex.

The protein localises to the cytoplasm. Functionally, the UvrABC repair system catalyzes the recognition and processing of DNA lesions. A damage recognition complex composed of 2 UvrA and 2 UvrB subunits scans DNA for abnormalities. Upon binding of the UvrA(2)B(2) complex to a putative damaged site, the DNA wraps around one UvrB monomer. DNA wrap is dependent on ATP binding by UvrB and probably causes local melting of the DNA helix, facilitating insertion of UvrB beta-hairpin between the DNA strands. Then UvrB probes one DNA strand for the presence of a lesion. If a lesion is found the UvrA subunits dissociate and the UvrB-DNA preincision complex is formed. This complex is subsequently bound by UvrC and the second UvrB is released. If no lesion is found, the DNA wraps around the other UvrB subunit that will check the other stand for damage. The polypeptide is UvrABC system protein B (Mycobacterium leprae (strain TN)).